The sequence spans 312 residues: MKNHTRQIEFILLGLTDNSQLQIVIFLFLLLNCVLSMIGNFTIIALILLDSQLKTPMYFFLRNFSFLEISFTTACIPRFLITIVTREKTISCNGCISQLFFYIFLGVTEFFLLAALSYDRYVAICKPLRYMSIMSNKVCYQLVFSSWVTGFLIIFTPLILGLNLDFCASNIIDHFICDISLILQLSCSDTHLLELIAFLLAVMTLIVTLFLVILSYSYIIKTILKFPSAQQKKKAFSTCSSHMIVVSITYGSCMFIYIKPSANERVALSKGVTVLNTSVAPLLNPFIYTLRNQQVKQAFKAVFRKIFSASDK.

At 1–22 (MKNHTRQIEFILLGLTDNSQLQ) the chain is on the extracellular side. Residue Asn3 is glycosylated (N-linked (GlcNAc...) asparagine). The helical transmembrane segment at 23 to 43 (IVIFLFLLLNCVLSMIGNFTI) threads the bilayer. The Cytoplasmic portion of the chain corresponds to 44–63 (IALILLDSQLKTPMYFFLRN). Residues 64–84 (FSFLEISFTTACIPRFLITIV) form a helical membrane-spanning segment. Residues 85 to 95 (TREKTISCNGC) are Extracellular-facing. Residues Cys95 and Cys177 are joined by a disulfide bond. Residues 96 to 116 (ISQLFFYIFLGVTEFFLLAAL) traverse the membrane as a helical segment. Residues 117-141 (SYDRYVAICKPLRYMSIMSNKVCYQ) are Cytoplasmic-facing. The chain crosses the membrane as a helical span at residues 142 to 162 (LVFSSWVTGFLIIFTPLILGL). The Extracellular segment spans residues 163–194 (NLDFCASNIIDHFICDISLILQLSCSDTHLLE). The helical transmembrane segment at 195–215 (LIAFLLAVMTLIVTLFLVILS) threads the bilayer. At 216–237 (YSYIIKTILKFPSAQQKKKAFS) the chain is on the cytoplasmic side. Residues 238–258 (TCSSHMIVVSITYGSCMFIYI) form a helical membrane-spanning segment. Topologically, residues 259–272 (KPSANERVALSKGV) are extracellular. A helical transmembrane segment spans residues 273–290 (TVLNTSVAPLLNPFIYTL). The Cytoplasmic portion of the chain corresponds to 291–312 (RNQQVKQAFKAVFRKIFSASDK).

The protein belongs to the G-protein coupled receptor 1 family.

It localises to the cell membrane. Its function is as follows. Odorant receptor. In Homo sapiens (Human), this protein is Olfactory receptor 6C70 (OR6C70).